Here is a 539-residue protein sequence, read N- to C-terminus: Chaperonin GroEL (539 aa).

Residues 30 to 33, 87 to 91, G414, 479 to 481, and D495 contribute to the ATP site; these read TLGP, DGTTT, and DAL.

It belongs to the chaperonin (HSP60) family. As to quaternary structure, forms a cylinder of 14 subunits composed of two heptameric rings stacked back-to-back. Interacts with the co-chaperonin GroES.

It is found in the cytoplasm. It catalyses the reaction ATP + H2O + a folded polypeptide = ADP + phosphate + an unfolded polypeptide.. In terms of biological role, together with its co-chaperonin GroES, plays an essential role in assisting protein folding. The GroEL-GroES system forms a nano-cage that allows encapsulation of the non-native substrate proteins and provides a physical environment optimized to promote and accelerate protein folding. The polypeptide is Chaperonin GroEL (Caldicellulosiruptor bescii (strain ATCC BAA-1888 / DSM 6725 / KCTC 15123 / Z-1320) (Anaerocellum thermophilum)).